The sequence spans 743 residues: Neutral ceramidase (743 aa).

Topologically, residues 1 to 14 are cytoplasmic; that stretch reads MASKSRRLSGLEIS. A helical; Signal-anchor for type II membrane protein membrane pass occupies residues 15-35; it reads LIVLFLLMTAVSVALITVLAL. Residues 36–743 lie on the Lumenal side of the membrane; that stretch reads KQESDKKEEV…FKVARSFYYF (708 aa). The disordered stretch occupies residues 40–60; it reads DKKEEVTPEEPSPSVTPPEKP. Residues 49–59 are compositionally biased toward pro residues; sequence EPSPSVTPPEK. H151 and H260 together coordinate Zn(2+). An N-linked (GlcNAc...) asparagine glycan is attached at N265. The active-site Nucleophile is the S312. 2 cysteine pairs are disulfide-bonded: C320–C334 and C327–C342. N-linked (GlcNAc...) asparagine glycosylation is found at N331, N389, N398, and N451. A disulfide bridge links C406 with C456. The Zn(2+) site is built by E498 and Y538. N661 carries N-linked (GlcNAc...) asparagine glycosylation. 3 residues coordinate Ca(2+): D672, S674, and T677. N-linked (GlcNAc...) asparagine glycosylation is present at N720.

Belongs to the neutral ceramidase family. Zn(2+) is required as a cofactor. Post-translationally, N-glycosylated. In terms of processing, O-glycosylated. Detected in intestine (at protein level).

It localises to the cell membrane. The protein localises to the membrane raft. Its subcellular location is the membrane. It is found in the caveola. The protein resides in the golgi apparatus membrane. It localises to the mitochondrion. The protein localises to the secreted. Its subcellular location is the extracellular exosome. It catalyses the reaction an N-acylsphing-4-enine + H2O = sphing-4-enine + a fatty acid. It carries out the reaction N-dodecanoylsphing-4-enine + H2O = dodecanoate + sphing-4-enine. The protein operates within lipid metabolism; sphingolipid metabolism. Its function is as follows. Plasma membrane ceramidase that hydrolyzes sphingolipid ceramides into sphingosine and free fatty acids at neutral pH. Ceramides, sphingosine, and its phosphorylated form sphingosine-1-phosphate are bioactive lipids that mediate cellular signaling pathways regulating several biological processes including cell proliferation, apoptosis and differentiation. Also catalyzes the reverse reaction allowing the synthesis of ceramides from fatty acids and sphingosine. Together with sphingomyelinase, participates in the production of sphingosine and sphingosine-1-phosphate from the degradation of sphingomyelin, a sphingolipid enriched in the plasma membrane of cells. Also participates in the hydrolysis of ceramides from the extracellular milieu allowing the production of sphingosine-1-phosphate inside and outside cells. The chain is Neutral ceramidase (asah2) from Danio rerio (Zebrafish).